A 331-amino-acid chain; its full sequence is Zinc finger CW-type PWWP domain protein 2 homolog (331 aa).

The CW-type zinc finger occupies 9–64 (EFVHRTWVQCENESCLKWRLLSPAAAAAVNPSEPWYCFMNTDPSYSSCSVSEEDFP). C18, C23, C45, and C56 together coordinate Zn(2+). The 65-residue stretch at 83-147 (LGSLVLVKLR…AAFVGHFSLT (65 aa)) folds into the PWWP domain. The interval 264–295 (IQEPTAREDESQGEQLSQCSPESPTGSPFQSY) is disordered. The segment covering 276–293 (GEQLSQCSPESPTGSPFQ) has biased composition (polar residues).

Functionally, histone methylation reader which binds to non-methylated (H3K4me0), monomethylated (H3K4me1), dimethylated (H3K4me2) and trimethylated (H3K4me3) 'Lys-4' on histone H3. The order of binding preference is H3K4me3 &gt; H3K4me2 &gt; H3K4me1 &gt; H3K4me0. This Mus musculus (Mouse) protein is Zinc finger CW-type PWWP domain protein 2 homolog (Zcwpw2).